The primary structure comprises 189 residues: HTH-type transcriptional repressor AcnR (189 aa).

Residues 10–70 (AERKVEILSG…EVAHEDMRKM (61 aa)) form the HTH tetR-type domain. The segment at residues 33 to 52 (TVARLEETIGKSRGAIFHHY) is a DNA-binding region (H-T-H motif). Residues 79–80 (LI), Arg-130, and Gln-134 each bind citrate. Glu-181 contributes to the Mg(2+) binding site. Arg-185 lines the citrate pocket.

In terms of assembly, homodimer.

AcnR negatively controls the expression of the aconitase gene acn. This chain is HTH-type transcriptional repressor AcnR, found in Corynebacterium jeikeium (strain K411).